The chain runs to 288 residues: Acetyl-coenzyme A carboxylase carboxyl transferase subunit beta (288 aa).

The 255-residue stretch at 34 to 288 (LFAKCPACKH…HLVAFHGGVS (255 aa)) folds into the CoA carboxyltransferase N-terminal domain. Zn(2+) is bound by residues Cys-38, Cys-41, Cys-56, and Cys-59. The C4-type zinc-finger motif lies at 38–59 (CPACKHMIYQKDLGPAKICPTC).

The protein belongs to the AccD/PCCB family. Acetyl-CoA carboxylase is a heterohexamer composed of biotin carboxyl carrier protein (AccB), biotin carboxylase (AccC) and two subunits each of ACCase subunit alpha (AccA) and ACCase subunit beta (AccD). Requires Zn(2+) as cofactor.

Its subcellular location is the cytoplasm. It catalyses the reaction N(6)-carboxybiotinyl-L-lysyl-[protein] + acetyl-CoA = N(6)-biotinyl-L-lysyl-[protein] + malonyl-CoA. Its pathway is lipid metabolism; malonyl-CoA biosynthesis; malonyl-CoA from acetyl-CoA: step 1/1. Its function is as follows. Component of the acetyl coenzyme A carboxylase (ACC) complex. Biotin carboxylase (BC) catalyzes the carboxylation of biotin on its carrier protein (BCCP) and then the CO(2) group is transferred by the transcarboxylase to acetyl-CoA to form malonyl-CoA. The protein is Acetyl-coenzyme A carboxylase carboxyl transferase subunit beta of Streptococcus equi subsp. zooepidemicus (strain MGCS10565).